A 127-amino-acid chain; its full sequence is UPF0102 protein Cpha266_0037 (127 aa).

Belongs to the UPF0102 family.

The sequence is that of UPF0102 protein Cpha266_0037 from Chlorobium phaeobacteroides (strain DSM 266 / SMG 266 / 2430).